The chain runs to 114 residues: Probable gas vesicle protein J2 (114 aa).

A compositionally biased stretch (basic and acidic residues) spans 1–10 (MTDLDHRYPG). The segment at 1–21 (MTDLDHRYPGEETEPYGPPSG) is disordered.

This sequence belongs to the gas vesicle GvpA family. In terms of assembly, interacts with GvpA.

It localises to the gas vesicle. Its function is as follows. A minor component of the gas vesicle, might be involved in nucleating gas vesicle formation. Gas vesicles (GV) are hollow, gas filled proteinaceous nanostructures. It is not clear what function GVs perform in soil bacteria. The chain is Probable gas vesicle protein J2 from Streptomyces coelicolor (strain ATCC BAA-471 / A3(2) / M145).